The following is a 111-amino-acid chain: MVLLDKLWDDIVAGPQPERGLGMLRKVPQPLNLKDEGESSKITMPTTPTTPVTPTTPISARKDNVWRSVFHPGSNLSSKTMGNQVFDSPQPNSPTVYDWMYSGETRSKHHR.

Residues 18 to 111 (ERGLGMLRKV…SGETRSKHHR (94 aa)) are disordered. Residues 43 to 57 (TMPTTPTTPVTPTTP) show a composition bias toward low complexity. Polar residues predominate over residues 74–95 (SNLSSKTMGNQVFDSPQPNSPT).

The protein belongs to the DRM1/ARP family.

The polypeptide is Auxin-repressed 12.5 kDa protein (Fragaria ananassa (Strawberry)).